The chain runs to 91 residues: UPF0358 protein SERP0701 (91 aa).

This sequence belongs to the UPF0358 family.

This Staphylococcus epidermidis (strain ATCC 35984 / DSM 28319 / BCRC 17069 / CCUG 31568 / BM 3577 / RP62A) protein is UPF0358 protein SERP0701.